The following is a 193-amino-acid chain: Holliday junction branch migration complex subunit RuvA (193 aa).

The interval 1–63 is domain I; sequence MIGKLTGTVT…ENINKLYGFE (63 aa). Residues 64-148 form a domain II region; the sequence is CRKSQEVARM…GIASSTNVHI (85 aa). Residues 149-150 form a flexible linker region; the sequence is AS. Residues 150 to 193 form a domain III region; that stretch reads SEAVSALVKLGFQHKPSHKVVMEIMTKRPAIEIAELITLALKML.

The protein belongs to the RuvA family. As to quaternary structure, homotetramer. Forms an RuvA(8)-RuvB(12)-Holliday junction (HJ) complex. HJ DNA is sandwiched between 2 RuvA tetramers; dsDNA enters through RuvA and exits via RuvB. An RuvB hexamer assembles on each DNA strand where it exits the tetramer. Each RuvB hexamer is contacted by two RuvA subunits (via domain III) on 2 adjacent RuvB subunits; this complex drives branch migration. In the full resolvosome a probable DNA-RuvA(4)-RuvB(12)-RuvC(2) complex forms which resolves the HJ.

Its subcellular location is the cytoplasm. In terms of biological role, the RuvA-RuvB-RuvC complex processes Holliday junction (HJ) DNA during genetic recombination and DNA repair, while the RuvA-RuvB complex plays an important role in the rescue of blocked DNA replication forks via replication fork reversal (RFR). RuvA specifically binds to HJ cruciform DNA, conferring on it an open structure. The RuvB hexamer acts as an ATP-dependent pump, pulling dsDNA into and through the RuvAB complex. HJ branch migration allows RuvC to scan DNA until it finds its consensus sequence, where it cleaves and resolves the cruciform DNA. This chain is Holliday junction branch migration complex subunit RuvA, found in Neorickettsia sennetsu (strain ATCC VR-367 / Miyayama) (Ehrlichia sennetsu).